A 93-amino-acid polypeptide reads, in one-letter code: Large ribosomal subunit protein uL23cz/uL23cy (93 aa).

This sequence belongs to the universal ribosomal protein uL23 family. Part of the 50S ribosomal subunit.

The protein resides in the plastid. The protein localises to the chloroplast. Its function is as follows. Binds to 23S rRNA. The polypeptide is Large ribosomal subunit protein uL23cz/uL23cy (rpl23-A) (Jasminum nudiflorum (Winter jasmine)).